A 206-amino-acid chain; its full sequence is Imidazole glycerol phosphate synthase subunit hisH (206 aa).

Residues 2–206 (KVGLVDYSMG…REVMKKAASL (205 aa)) enclose the Glutamine amidotransferase type-1 domain. Catalysis depends on Cys-80, which acts as the Nucleophile. Residues His-184 and Glu-186 contribute to the active site.

As to quaternary structure, heterodimer of hisH and hisF.

Its subcellular location is the plastid. It localises to the chloroplast. It catalyses the reaction 5-[(5-phospho-1-deoxy-D-ribulos-1-ylimino)methylamino]-1-(5-phospho-beta-D-ribosyl)imidazole-4-carboxamide + L-glutamine = D-erythro-1-(imidazol-4-yl)glycerol 3-phosphate + 5-amino-1-(5-phospho-beta-D-ribosyl)imidazole-4-carboxamide + L-glutamate + H(+). The catalysed reaction is L-glutamine + H2O = L-glutamate + NH4(+). It functions in the pathway amino-acid biosynthesis; L-histidine biosynthesis; L-histidine from 5-phospho-alpha-D-ribose 1-diphosphate: step 5/9. In terms of biological role, IGPS catalyzes the conversion of PRFAR and glutamine to IGP, AICAR and glutamate. The HisH subunit catalyzes the hydrolysis of glutamine to glutamate and ammonia as part of the synthesis of IGP and AICAR. The resulting ammonia molecule is channeled to the active site of HisF. This Cyanidioschyzon merolae (strain NIES-3377 / 10D) (Unicellular red alga) protein is Imidazole glycerol phosphate synthase subunit hisH.